Reading from the N-terminus, the 286-residue chain is Transcriptional regulator of yeast form adherence 4 (286 aa).

Low complexity-rich tracts occupy residues 1–29 and 37–65; these read MSLP…PPSS and LSTS…TTTN. The disordered stretch occupies residues 1 to 71; that stretch reads MSLPMSPVSP…TTTNYGTKTP (71 aa). 2 consecutive C2H2-type zinc fingers follow at residues 78 to 101 and 107 to 130; these read FNCT…LSTH and FTCG…KNLH. The segment at 146-260 is disordered; the sequence is HCNKDNDSKS…ITNSSTSHIH (115 aa). Low complexity-rich tracts occupy residues 156–165 and 228–244; these read GSDSNTNKTN and SVPS…PTST. Residues 245–260 are compositionally biased toward polar residues; sequence NNDTASITNSSTSHIH.

It localises to the nucleus. Its function is as follows. Transcription factor required for yeast cell adherence to silicone substrate. The sequence is that of Transcriptional regulator of yeast form adherence 4 (TRY4) from Candida albicans (strain SC5314 / ATCC MYA-2876) (Yeast).